A 283-amino-acid chain; its full sequence is Probable endonuclease 4 (283 aa).

The Zn(2+) site is built by His-67, His-107, Glu-144, Asp-178, His-181, His-215, Asp-228, His-230, and Glu-260.

Belongs to the AP endonuclease 2 family. The cofactor is Zn(2+).

The catalysed reaction is Endonucleolytic cleavage to 5'-phosphooligonucleotide end-products.. Endonuclease IV plays a role in DNA repair. It cleaves phosphodiester bonds at apurinic or apyrimidinic (AP) sites, generating a 3'-hydroxyl group and a 5'-terminal sugar phosphate. This Geobacter sp. (strain M21) protein is Probable endonuclease 4.